Reading from the N-terminus, the 917-residue chain is Hexokinase-2 (917 aa).

Methionine 1 carries the N-acetylmethionine modification. The interval 1-16 (MIASHLLAYFFTELNH) is mitochondrial-binding peptide (MBP). Hexokinase domains are found at residues 16–458 (HDQV…MVTA) and 464–906 (AYQH…LITA). ATP is bound by residues arginine 30 and 84–89 (DLGGTN). Residues 73-207 (DGTEHGEFLA…DFDIDIVAMV (135 aa)) are hexokinase small subdomain 1. D-glucose 6-phosphate is bound at residue 84 to 88 (DLGGT). Residues 155–156 (SF), 172–173 (TK), 208–209 (ND), asparagine 235, glutamate 260, and 291–294 (QLFE) contribute to the D-glucose site. Positions 208-447 (NDTVATMMTC…CDIRFLCSED (240 aa)) are hexokinase large subdomain 1. A D-glucose 6-phosphate-binding site is contributed by aspartate 209. Residue 413-415 (DGS) coordinates D-glucose 6-phosphate. 425 to 426 (KR) lines the ATP pocket. D-glucose 6-phosphate-binding positions include serine 449 and 532–536 (DLGGT). Residues 521–655 (DGTEKGDFLA…EFDLDVVAVV (135 aa)) are hexokinase small subdomain 2. Residue 532–537 (DLGGTN) participates in ATP binding. D-glucose is bound by residues 603–604 (SF), 620–621 (TK), and 656–657 (ND). Residues 656-895 (NDTVGTMMTC…CDVSFLESED (240 aa)) are hexokinase large subdomain 2. The D-glucose 6-phosphate site is built by aspartate 657 and threonine 680. Threonine 680 contributes to the ATP binding site. D-glucose is bound by residues 682 to 683 (SN), glutamate 708, and 739 to 742 (QRFE). Residues 747–748 (GM), 784–788 (TKFLS), and 863–867 (TLYKL) each bind ATP. Residues 861–863 (DGT) and serine 897 contribute to the D-glucose 6-phosphate site.

It belongs to the hexokinase family. As to quaternary structure, monomer. Interacts with TIGAR; the interaction increases hexokinase activity in a hypoxia- and HIF1A-dependent manner.

Its subcellular location is the mitochondrion outer membrane. The protein resides in the cytoplasm. It localises to the cytosol. The catalysed reaction is a D-hexose + ATP = a D-hexose 6-phosphate + ADP + H(+). It catalyses the reaction D-fructose + ATP = D-fructose 6-phosphate + ADP + H(+). The enzyme catalyses D-glucose + ATP = D-glucose 6-phosphate + ADP + H(+). It participates in carbohydrate metabolism; hexose metabolism. It functions in the pathway carbohydrate degradation; glycolysis; D-glyceraldehyde 3-phosphate and glycerone phosphate from D-glucose: step 1/4. Hexokinase activity is specifically inhibited by 2,6-disubstituted glucosamines. Its function is as follows. Catalyzes the phosphorylation of hexose, such as D-glucose and D-fructose, to hexose 6-phosphate (D-glucose 6-phosphate and D-fructose 6-phosphate, respectively). Mediates the initial step of glycolysis by catalyzing phosphorylation of D-glucose to D-glucose 6-phosphate. Plays a key role in maintaining the integrity of the outer mitochondrial membrane by preventing the release of apoptogenic molecules from the intermembrane space and subsequent apoptosis. This chain is Hexokinase-2, found in Equus zebra (Mountain zebra).